A 250-amino-acid chain; its full sequence is MLEKQKGIIIKSVDYGESDKIITILNEHGAKIPLMVRRAKKSKTGLQAHTQLFVYGLFIYNKWKGMGTLSSVDVINQYYDLRLDIFNSSYATLCTEAIERSMDNDDISPFHYKLLHFVLEKISNGDSAQLMSIIVLLKCMNRFGFTAFFNHSAISNSYDQSKLVAYSFVYDGTILESELYKDPHAFRISNKTLYLLDVLQKLPIDKMNQFNISQEILDEMSELILLIYKEYAGMYFKGQKLINQLKRIEY.

This sequence belongs to the RecO family.

Functionally, involved in DNA repair and RecF pathway recombination. The sequence is that of DNA repair protein RecO from Staphylococcus haemolyticus (strain JCSC1435).